Reading from the N-terminus, the 33-residue chain is Dermaseptin-J7 (33 aa).

Valine amide is present on V33.

In terms of tissue distribution, expressed by the skin glands.

It localises to the secreted. Has antimicrobial activity. The chain is Dermaseptin-J7 from Phasmahyla jandaia (Jandaia leaf frog).